The chain runs to 876 residues: Eukaryotic translation initiation factor 3 subunit C (876 aa).

2 disordered regions span residues 1 to 25 and 154 to 233; these read MSRF…VVRA and SXFR…IREQ. A compositionally biased stretch (acidic residues) spans 11-20; the sequence is SESESSSEDE. 2 stretches are compositionally biased toward basic and acidic residues: residues 154 to 172 and 182 to 192; these read SXFR…KDSS and KPIKEKPKPEP. Residues 206 to 219 show a composition bias toward low complexity; it reads SMDWASSSSDSSFS. The 177-residue stretch at 632-808 folds into the PCI domain; that stretch reads FHMHINLELL…ECAILHRSEP (177 aa). Residues 839 to 876 are disordered; the sequence is FFQRGGAQRGEGRQRERPREGWNRRTRNRRRDDERADD. Over residues 848-861 the composition is skewed to basic and acidic residues; the sequence is GEGRQRERPREGWN.

Belongs to the eIF-3 subunit C family. In terms of assembly, component of the eukaryotic translation initiation factor 3 (eIF-3) complex.

It is found in the cytoplasm. In terms of biological role, component of the eukaryotic translation initiation factor 3 (eIF-3) complex, which is involved in protein synthesis of a specialized repertoire of mRNAs and, together with other initiation factors, stimulates binding of mRNA and methionyl-tRNAi to the 40S ribosome. The eIF-3 complex specifically targets and initiates translation of a subset of mRNAs involved in cell proliferation. The polypeptide is Eukaryotic translation initiation factor 3 subunit C (Bombyx mori (Silk moth)).